Here is a 592-residue protein sequence, read N- to C-terminus: MHVARLLPLLLLLGQQLRAASVTEPTLPTVVLAILARNAEHSLPHYLGALERLDYPRARLALWCATDHNMDNTTGMLREWLAAVGRDYATVVWKPEEEARSYPDEQGPKHWTKERHQFLMELRQEALAFARDWGADYILFADTDNILTNNQTLKLLIDRQLPVVAPMLDSQTYYSNFWCGITPQGYYRRTAEYFPTKNRQRQGCFRVPMVHSTFLLSLQTEETARLAFYPPHPNYSWPFDDIIVFAYACQAAGVSMHVCNDHRYGYMNVVVKPHQSLEEEKTNFIHLILEALVDGPPMLASAHVSRPPKKLSKMGFDEVFVISLARRPQRRARMLSSLWEMEISAQVVDAVDGRTLNSSILKHLGVDLLPGYQDPYSGHTLTKGEVGCFLSHYSIWEEVVARGLARVVVFEDDVRFKDNFRRRLERLMEDVLIQKLSWDLIYLGRKQVNPEEEVAVEGLPGLVVAGYSYWTLAYTLSLAGARKLLASQPLHRMLPVDEFLPVMFDRHPNDQYKAYFWPRDLQAFSARPLLASPTHYSGDAEWLSDTETSSPWDDDSGRLISQTGSQKALRGPHLHLTGSSGHSLHPHHRDEL.

The first 19 residues, 1 to 19 (MHVARLLPLLLLLGQQLRA), serve as a signal peptide directing secretion. N72, N150, N234, and N357 each carry an N-linked (GlcNAc...) asparagine glycan. The disordered stretch occupies residues 540–592 (AEWLSDTETSSPWDDDSGRLISQTGSQKALRGPHLHLTGSSGHSLHPHHRDEL). Residues 589 to 592 (RDEL) carry the Prevents secretion from ER motif.

This sequence belongs to the glycosyltransferase 25 family.

It localises to the endoplasmic reticulum lumen. Probable cell adhesion protein involved in leukocyte transmigration across the blood-brain barrier. Does not express any beta-galactosyltransferase activity in vitro. This is Inactive glycosyltransferase 25 family member 3 (Cercam) from Mus musculus (Mouse).